The sequence spans 305 residues: CRISPR-associated endonuclease Cas1 (305 aa).

The tract at residues 96 to 278 (SDKLLYQAKL…EDVLAAGEIQ (183 aa)) is sufficient for cleavage of ssRNA, ssDNA and Holliday junction DNA. 3 residues coordinate Mg(2+): Glu141, His208, and Asp221. Residues 278-305 (QPPAPPEDAQPVAIPLPVSLGDAGHRSS) form a disordered region.

The protein belongs to the CRISPR-associated endonuclease Cas1 family. Homodimer. Part of the Cas1-Cas2 complex. Interacts with RecB, RecC, RuvB, CasC and CasE. Forms a hexamer with 2 Cas1 dimers sandwiching a Cas2 dimer. The DNA lies across a flat surface extending from 1 Cas1 dimer, across the Cas2 dimer and contacting the other Cas1 dimer. Only 1 Cas1 protein from each dimer is catalytic, the other interacts with the Cas2 dimer and possibly target DNA. Mg(2+) serves as cofactor.

It localises to the cytoplasm. Its activity is regulated as follows. Nuclease activity partially inhibited by CasE. Functionally, CRISPR (clustered regularly interspaced short palindromic repeat), is an adaptive immune system that provides protection against mobile genetic elements (viruses, transposable elements and conjugative plasmids). CRISPR clusters contain sequences complementary to antecedent mobile elements and target invading nucleic acids. CRISPR clusters are transcribed and processed into CRISPR RNA (crRNA). The Cas1-Cas2 complex is involved in CRISPR adaptation, the first stage of CRISPR immunity, being required for the addition/removal of CRISPR spacers at the leader end of the CRISPR locus. The Cas1-Cas2 complex introduces staggered nicks into both strands of the CRISPR array near the leader repeat and joins the 5'-ends of the repeat strands with the 3'-ends of the new spacer sequence. Spacer DNA integration requires supercoiled target DNA and 3'-OH ends on the inserted (spacer) DNA and probably initiates with a nucleophilic attack of the C 3'-OH end of the protospacer on the minus strand of the first repeat sequence. Expression of Cas1-Cas2 in a strain lacking both genes permits spacer acquisition. Non-specifically binds DNA; the Cas1-Cas2 complex preferentially binds CRISPR-locus DNA. Highest binding is seen to a dual forked DNA complex with 3'-overhangs and a protospacer-adjacent motif-complement specifically positioned. The protospacer DNA lies across a flat surface extending from 1 Cas1 dimer, across the Cas2 dimer and contacting the other Cas1 dimer; the 23 bp-long ds section of the DNA is bracketed by 1 Tyr-22 from each of the Cas1 dimers. Cas1 cuts within the 3'-overhang, to generate a 33-nucleotide DNA that is probably incorporated into the CRISPR leader by a cut-and-paste mechanism. Cas1 alone endonucleolytically cleaves linear ssRNA, ssDNA and short (34 base) dsDNA as well as branched DNA substrates such as Holliday junctions, replication forks and 5'-flap DNA substrates. In vitro catalyzes a concerted transesterification reaction on branched DNA, as would be expected during integration of protospacers into the CRISPR leader sequence; Cas2 is not required in vitro. This reaction requires a 3'-OH group at the branch point. Genetic interactions suggest Cas1 interacts with components of the RecBC and RuvB DNA repair systems. The polypeptide is CRISPR-associated endonuclease Cas1 (ygbT) (Escherichia coli (strain K12)).